A 344-amino-acid polypeptide reads, in one-letter code: N-acetyl-gamma-glutamyl-phosphate reductase (344 aa).

The active site involves Cys150.

The protein belongs to the NAGSA dehydrogenase family. Type 1 subfamily.

The protein resides in the cytoplasm. It catalyses the reaction N-acetyl-L-glutamate 5-semialdehyde + phosphate + NADP(+) = N-acetyl-L-glutamyl 5-phosphate + NADPH + H(+). It functions in the pathway amino-acid biosynthesis; L-arginine biosynthesis; N(2)-acetyl-L-ornithine from L-glutamate: step 3/4. In terms of biological role, catalyzes the NADPH-dependent reduction of N-acetyl-5-glutamyl phosphate to yield N-acetyl-L-glutamate 5-semialdehyde. The sequence is that of N-acetyl-gamma-glutamyl-phosphate reductase from Pseudomonas putida (strain W619).